Reading from the N-terminus, the 545-residue chain is Glucose-6-phosphate isomerase (545 aa).

Catalysis depends on Glu-351, which acts as the Proton donor. Catalysis depends on residues His-382 and Lys-510.

It belongs to the GPI family.

It localises to the cytoplasm. It catalyses the reaction alpha-D-glucose 6-phosphate = beta-D-fructose 6-phosphate. Its pathway is carbohydrate biosynthesis; gluconeogenesis. It participates in carbohydrate degradation; glycolysis; D-glyceraldehyde 3-phosphate and glycerone phosphate from D-glucose: step 2/4. Functionally, catalyzes the reversible isomerization of glucose-6-phosphate to fructose-6-phosphate. This chain is Glucose-6-phosphate isomerase, found in Shewanella sp. (strain MR-7).